Here is a 614-residue protein sequence, read N- to C-terminus: Polyamine transporter 2 (614 aa).

Residues 1-40 form a disordered region; it reads MSDQESVVSFNSQNTSMVDVEGQQPQQYVPSKTNSRANQL. The Cytoplasmic segment spans residues 1–173; it reads MSDQESVVSF…WPSWVRWSYT (173 aa). Ser50 is modified (phosphoserine). The segment covering 99–122 has biased composition (polar residues); sequence RTASALSRTRTKQLNRTATNSSST. Residues 99 to 144 form a disordered region; that stretch reads RTASALSRTRTKQLNRTATNSSSTGKEEMEEEETEEREDQSGENEL. Residues 126–144 are compositionally biased toward acidic residues; it reads EMEEEETEEREDQSGENEL. Residues 174–194 traverse the membrane as a helical segment; the sequence is VLLSILVICVAYGSACISGGL. At 195-206 the chain is on the extracellular side; sequence GTVEKKYHVGME. Residues 207–227 form a helical membrane-spanning segment; it reads AAILSCSLMVIGFSLGPLIWS. Over 228–236 the chain is Cytoplasmic; the sequence is PVSDLYGRR. The helical transmembrane segment at 237 to 257 threads the bilayer; the sequence is VAYFVSMGLYVIFNIPCALAP. The Extracellular segment spans residues 258–266; the sequence is NLGCLLACR. A helical membrane pass occupies residues 267–287; that stretch reads FLCGVWSSSGLCLVGGSIADM. Residues 288-297 lie on the Cytoplasmic side of the membrane; that stretch reads FPSETRGKAI. The helical transmembrane segment at 298–318 threads the bilayer; it reads AFFAFAPYVGPVVGPLVNGFI. Residues 319-326 lie on the Extracellular side of the membrane; it reads SVSTGRMD. The helical transmembrane segment at 327 to 347 threads the bilayer; sequence LIFWVNMAFAGVMWIISSAIP. The Cytoplasmic segment spans residues 348-407; that stretch reads ETYAPVILKRKAARLRKETGNPKIMTEQEAQGVSMSEMMRACLLRPLYFAVTEPVLVATC. The chain crosses the membrane as a helical span at residues 408–428; that stretch reads FYVCLIYSLLYAFFFAFPVIF. Topologically, residues 429-437 are extracellular; that stretch reads GELYGYKDN. A helical transmembrane segment spans residues 438–458; it reads LVGLMFIPIVIGALWALATTF. Residues 459–478 lie on the Cytoplasmic side of the membrane; the sequence is YCENKYLQIVKQRKPTPEDR. A helical transmembrane segment spans residues 479 to 499; that stretch reads LLGAKIGAPFAAIALWILGAT. Topologically, residues 500 to 503 are extracellular; it reads AYKH. A helical membrane pass occupies residues 504–524; the sequence is IIWVGPASAGLAFGFGMVLIY. Residues 525–541 lie on the Cytoplasmic side of the membrane; the sequence is YSLNNYIIDCYVQYASS. The chain crosses the membrane as a helical span at residues 542–562; sequence ALATKVFLRSAGGAAFPLFTI. The Extracellular segment spans residues 563–574; it reads QMYHKLNLHWGS. The chain crosses the membrane as a helical span at residues 575 to 595; it reads WLLAFISTAMIALPFAFSYWG. Residues 596–614 are Cytoplasmic-facing; that stretch reads KGLRHKLSKKDYSIDSVEM.

Belongs to the major facilitator superfamily. DHA1 family. Polyamines/proton antiporter (TC 2.A.1.2.16) subfamily.

It localises to the cell membrane. In terms of biological role, cell membrane polyamine/proton antiporter, involved in the detoxification of excess polyamines in the cytoplasm. Recognizes spermine, but not spermidine. This is Polyamine transporter 2 (TPO2) from Saccharomyces cerevisiae (strain ATCC 204508 / S288c) (Baker's yeast).